The chain runs to 374 residues: Glutamate 5-kinase (374 aa).

Residue Lys8 coordinates ATP. 3 residues coordinate substrate: Ser49, Asp136, and Asn148. Residues Thr168–Asp169 and Thr211–Lys217 contribute to the ATP site. The PUA domain maps to Gln276–Gly354.

This sequence belongs to the glutamate 5-kinase family.

The protein localises to the cytoplasm. The enzyme catalyses L-glutamate + ATP = L-glutamyl 5-phosphate + ADP. It functions in the pathway amino-acid biosynthesis; L-proline biosynthesis; L-glutamate 5-semialdehyde from L-glutamate: step 1/2. In terms of biological role, catalyzes the transfer of a phosphate group to glutamate to form L-glutamate 5-phosphate. This is Glutamate 5-kinase from Picosynechococcus sp. (strain ATCC 27264 / PCC 7002 / PR-6) (Agmenellum quadruplicatum).